An 869-amino-acid chain; its full sequence is Aminopeptidase N (869 aa).

Substrate-binding positions include Glu122 and 262–266 (GAMEN). Residue His298 coordinates Zn(2+). Glu299 (proton acceptor) is an active-site residue. 2 residues coordinate Zn(2+): His302 and Glu321.

It belongs to the peptidase M1 family. It depends on Zn(2+) as a cofactor.

The protein resides in the cell inner membrane. The catalysed reaction is Release of an N-terminal amino acid, Xaa-|-Yaa- from a peptide, amide or arylamide. Xaa is preferably Ala, but may be most amino acids including Pro (slow action). When a terminal hydrophobic residue is followed by a prolyl residue, the two may be released as an intact Xaa-Pro dipeptide.. In terms of biological role, aminopeptidase N is involved in the degradation of intracellular peptides generated by protein breakdown during normal growth as well as in response to nutrient starvation. In Haemophilus influenzae (strain ATCC 51907 / DSM 11121 / KW20 / Rd), this protein is Aminopeptidase N (pepN).